A 96-amino-acid polypeptide reads, in one-letter code: Co-chaperonin GroES (96 aa).

Belongs to the GroES chaperonin family. As to quaternary structure, heptamer of 7 subunits arranged in a ring. Interacts with the chaperonin GroEL.

It is found in the cytoplasm. Its function is as follows. Together with the chaperonin GroEL, plays an essential role in assisting protein folding. The GroEL-GroES system forms a nano-cage that allows encapsulation of the non-native substrate proteins and provides a physical environment optimized to promote and accelerate protein folding. GroES binds to the apical surface of the GroEL ring, thereby capping the opening of the GroEL channel. The chain is Co-chaperonin GroES from Delftia acidovorans (strain DSM 14801 / SPH-1).